The primary structure comprises 698 residues: Transcription factor cwo (698 aa).

The basic motif; degenerate stretch occupies residues 62–75 (QDPLSHRIIEKRRR). The bHLH domain occupies 62–117 (QDPLSHRIIEKRRRDRMNSCLADLSRLIPPQYQRKGRGRIEKTEIIEMAIRHLKHL). Positions 76–117 (DRMNSCLADLSRLIPPQYQRKGRGRIEKTEIIEMAIRHLKHL) are helix-loop-helix motif. Residues 128–159 (YRSGYMDCMKEAAKFLYDVHMQDFCHRLLGRL) enclose the Orange domain. Disordered regions lie at residues 257-319 (SSPA…ASST) and 349-369 (STAP…FESS). Over residues 280–318 (APPAADNVPSNSTGSGSAAACAGGNSNSSGSNSSNAASS) the composition is skewed to low complexity. Residues 359-369 (TDSSHHDFESS) show a composition bias toward basic and acidic residues.

As to expression, expressed in adult brain where it is detected in the dorsal lateral neurons, small and large ventral lateral neurons and dorsal neurons 1, 2 and 3 (at protein level). Expressed at constant levels in a 12 hour light / 12 hour day cycle (at protein level). Strongly expressed in pacemaker neurons. In adults, mRNA expression oscillates in a circadian manner with a peak at around 14 hour Zeitgeber time. mRNA levels oscillate in a rhythmic manner in both 12 hour light / 12 hour dark and constant dark conditions with a morning peak around the time of lights-on and an evening peak around the time of lights-off in light/dark conditions. During stage 8 of embryonic development, expressed in the anterior and posterior midgut primordia and expression in the gut continues throughout embryonic development. During germ band retraction, expression is initiated in many tissues in a prominent segmentally repeated pattern. Later, expression is ubiquitous but has higher levels in segmentally repeated clusters of cells. Expression is also found in cells of the amnioserosa, in the head region, in posterior spiracles and in tracheal trees.

It is found in the nucleus. Its function is as follows. Plays a role in the regulation of circadian rhythms. Transcriptional repressor which inhibits Clock-mediated transcriptional activation by binding to E boxes in the promoters of Clock target genes and repressing their transcription. E box binding activity is time-dependent with higher binding activity seen in the early morning (zeitgeber time 2) than early evening (zeitgeber time 14) and is dependent on the presence of the circadian protein per. It is likely that per binds to Clock-cycle heterodimers, reducing their affinity for E box binding and allowing cwo to bind instead. Negatively regulates its own expression. This chain is Transcription factor cwo, found in Drosophila melanogaster (Fruit fly).